The chain runs to 602 residues: Leishmanolysin (602 aa).

Positions 1–39 (MSVDSSSTHRRRCVAARLVRLAAAGAAVTVAVGTAAAWA) are cleaved as a signal peptide. Positions 40–100 (HAGALQHRCV…DPRPGSARSV (61 aa)) are cleaved as a propeptide — activation peptide. Intrachain disulfides connect Cys-125/Cys-142 and Cys-191/Cys-230. Position 264 (His-264) interacts with Zn(2+). Residue Glu-265 is part of the active site. His-268 lines the Zn(2+) pocket. An N-linked (GlcNAc...) asparagine glycan is attached at Asn-300. 7 disulfides stabilise this stretch: Cys-314-Cys-386, Cys-393-Cys-455, Cys-406-Cys-425, Cys-415-Cys-489, Cys-466-Cys-510, Cys-515-Cys-565, and Cys-535-Cys-558. His-334 contributes to the Zn(2+) binding site. N-linked (GlcNAc...) asparagine glycosylation is present at Asn-407. Asn-534 carries an N-linked (GlcNAc...) asparagine glycan. Residue Asn-577 is the site of GPI-anchor amidated asparagine attachment. The propeptide at 578–602 (TAAGRRGPRAAATALLVAALLAVAL) is removed in mature form.

It belongs to the peptidase M8 family. Zn(2+) is required as a cofactor. In terms of processing, the phosphatidylinositol moiety of the GPI-anchor contains a fully saturated, unbranched 1-O-alkyl chain (mainly C24:0) and a mixture of fully saturated unbranched 2-O-acyl chains (C12:0, C14:0, C16:0, and C18:0).

Its subcellular location is the cell membrane. The enzyme catalyses Preference for hydrophobic residues at P1 and P1' and basic residues at P2' and P3'. A model nonapeptide is cleaved at -Ala-Tyr-|-Leu-Lys-Lys-.. Its function is as follows. Has an integral role during the infection of macrophages in the mammalian host. This is Leishmanolysin (gp63) from Leishmania major.